The primary structure comprises 334 residues: Glycerol-3-phosphate dehydrogenase [NAD(P)+] (334 aa).

Ser-13, Phe-14, and Lys-108 together coordinate NADPH. Sn-glycerol 3-phosphate contacts are provided by Lys-108, Gly-137, and Thr-139. NADPH is bound at residue Ala-141. The sn-glycerol 3-phosphate site is built by Lys-193, Asp-246, Ser-256, Arg-257, and Asn-258. Lys-193 acts as the Proton acceptor in catalysis. NADPH is bound at residue Arg-257. Residues Val-281 and Glu-283 each coordinate NADPH.

It belongs to the NAD-dependent glycerol-3-phosphate dehydrogenase family.

The protein localises to the cytoplasm. The catalysed reaction is sn-glycerol 3-phosphate + NAD(+) = dihydroxyacetone phosphate + NADH + H(+). The enzyme catalyses sn-glycerol 3-phosphate + NADP(+) = dihydroxyacetone phosphate + NADPH + H(+). It functions in the pathway membrane lipid metabolism; glycerophospholipid metabolism. Catalyzes the reduction of the glycolytic intermediate dihydroxyacetone phosphate (DHAP) to sn-glycerol 3-phosphate (G3P), the key precursor for phospholipid synthesis. This chain is Glycerol-3-phosphate dehydrogenase [NAD(P)+], found in Bartonella tribocorum (strain CIP 105476 / IBS 506).